Reading from the N-terminus, the 264-residue chain is Small ribosomal subunit protein eS1 (264 aa).

A disordered region spans residues 233–264 (GEGGGAGKPSGDEAGAKVERADGYEPPVQESV). Basic and acidic residues predominate over residues 242-255 (SGDEAGAKVERADG).

This sequence belongs to the eukaryotic ribosomal protein eS1 family. As to quaternary structure, component of the small ribosomal subunit. Mature ribosomes consist of a small (40S) and a large (60S) subunit. The 40S subunit contains about 33 different proteins and 1 molecule of RNA (18S). The 60S subunit contains about 49 different proteins and 3 molecules of RNA (25S, 5.8S and 5S).

The protein localises to the cytoplasm. The chain is Small ribosomal subunit protein eS1 from Eimeria tenella (Coccidian parasite).